We begin with the raw amino-acid sequence, 93 residues long: MKFAVILLFSLVVLAVASESVEEVRREIDIEDLPEQQRGCADLRQPCTEGDDCSCCGSEGVCNCSHPHKKGCYCKTAGLLEKLAKKFKGCKNK.

The N-terminal stretch at 1–18 (MKFAVILLFSLVVLAVAS) is a signal peptide. Residues 19–38 (ESVEEVRREIDIEDLPEQQR) constitute a propeptide that is removed on maturation.

The protein belongs to the neurotoxin 31 family. Contains 5 disulfide bonds. As to expression, expressed by the venom gland.

The protein localises to the secreted. The protein is U12-lycotoxin-Ls1d of Lycosa singoriensis (Wolf spider).